The sequence spans 309 residues: Histidine protein methyltransferase 1 homolog (309 aa).

Disordered regions lie at residues 1 to 37 (MSFKFNFQVDEDENDNGNNNEQNNEESKLDISEFDSS) and 79 to 111 (KPFKGNQDNNNDNNVNSNDKNDNNNNNNNNNKD). Residues 25–37 (EESKLDISEFDSS) are compositionally biased toward basic and acidic residues. Over residues 84–109 (NQDNNNDNNVNSNDKNDNNNNNNNNN) the composition is skewed to low complexity. S-adenosyl-L-methionine is bound by residues 132-136 (LWECS), G159, 179-181 (QDY), 209-211 (GDW), and S229.

Belongs to the methyltransferase superfamily. METTL18 family.

It localises to the cytoplasm. Its subcellular location is the cytosol. The protein localises to the nucleus. It is found in the nucleolus. It catalyses the reaction L-histidyl-[protein] + S-adenosyl-L-methionine = N(tele)-methyl-L-histidyl-[protein] + S-adenosyl-L-homocysteine + H(+). In terms of biological role, protein-L-histidine N-tele-methyltransferase that probably monomethylates RPL3. Through the methylation of RPL3 may regulate the dynamics of pre-rRNA processing, ribosome biogenesis, and translation. The chain is Histidine protein methyltransferase 1 homolog from Dictyostelium discoideum (Social amoeba).